The chain runs to 239 residues: Ribonuclease PH (239 aa).

Phosphate contacts are provided by residues arginine 87 and 125–127; that span reads GTR.

Belongs to the RNase PH family. In terms of assembly, homohexameric ring arranged as a trimer of dimers.

The catalysed reaction is tRNA(n+1) + phosphate = tRNA(n) + a ribonucleoside 5'-diphosphate. Functionally, phosphorolytic 3'-5' exoribonuclease that plays an important role in tRNA 3'-end maturation. Removes nucleotide residues following the 3'-CCA terminus of tRNAs; can also add nucleotides to the ends of RNA molecules by using nucleoside diphosphates as substrates, but this may not be physiologically important. Probably plays a role in initiation of 16S rRNA degradation (leading to ribosome degradation) during starvation. The polypeptide is Ribonuclease PH (Acaryochloris marina (strain MBIC 11017)).